The primary structure comprises 81 residues: Photosystem I iron-sulfur center (81 aa).

4Fe-4S ferredoxin-type domains follow at residues 2–31 (SHSVKIYDTCIGCTQCVRACPTDVLEMIPW) and 39–68 (IASAPRTEDCVGCKRCESACPTDFLSVRVY). 8 residues coordinate [4Fe-4S] cluster: Cys11, Cys14, Cys17, Cys21, Cys48, Cys51, Cys54, and Cys58.

As to quaternary structure, the eukaryotic PSI reaction center is composed of at least 11 subunits. [4Fe-4S] cluster serves as cofactor.

It localises to the plastid thylakoid membrane. It catalyses the reaction reduced [plastocyanin] + hnu + oxidized [2Fe-2S]-[ferredoxin] = oxidized [plastocyanin] + reduced [2Fe-2S]-[ferredoxin]. Apoprotein for the two 4Fe-4S centers FA and FB of photosystem I (PSI); essential for photochemical activity. FB is the terminal electron acceptor of PSI, donating electrons to ferredoxin. The C-terminus interacts with PsaA/B/D and helps assemble the protein into the PSI complex. Required for binding of PsaD and PsaE to PSI. PSI is a plastocyanin-ferredoxin oxidoreductase, converting photonic excitation into a charge separation, which transfers an electron from the donor P700 chlorophyll pair to the spectroscopically characterized acceptors A0, A1, FX, FA and FB in turn. In Cuscuta reflexa (Southern Asian dodder), this protein is Photosystem I iron-sulfur center.